The primary structure comprises 424 residues: GTPase Obg (424 aa).

An Obg domain is found at 1 to 158 (MFYDQAKIYV…RNLLLELKLL (158 aa)). In terms of domain architecture, OBG-type G spans 159–329 (ADVGLVGFPN…LVYAAAKALP (171 aa)). Residues 165-172 (GFPNVGKS), 190-194 (FTTLV), 212-215 (DIPG), 282-285 (NKMD), and 310-312 (SAA) each bind GTP. Ser172 and Thr192 together coordinate Mg(2+). The OCT domain occupies 347–424 (TQASAPHRFE…IAGIEFEWEE (78 aa)).

This sequence belongs to the TRAFAC class OBG-HflX-like GTPase superfamily. OBG GTPase family. In terms of assembly, monomer. Mg(2+) serves as cofactor.

It localises to the cytoplasm. Functionally, an essential GTPase which binds GTP, GDP and possibly (p)ppGpp with moderate affinity, with high nucleotide exchange rates and a fairly low GTP hydrolysis rate. Plays a role in control of the cell cycle, stress response, ribosome biogenesis and in those bacteria that undergo differentiation, in morphogenesis control. The chain is GTPase Obg from Desulfitobacterium hafniense (strain Y51).